A 307-amino-acid polypeptide reads, in one-letter code: Estrogen receptor (307 aa).

The segment at residues 1 to 43 (GHNDYMCPATNQCTIDKNRRKSCQACRLRKCYEVGMMKGGIRK) is a DNA-binding region (nuclear receptor). An NR C4-type zinc finger spans residues 7–31 (CPATNQCTIDKNRRKSCQACRLRKC). Residues 44 to 95 (DRRGGRILKHKRQREEHDNRNAGAIVERRSPNLWPSPLMITHNKKNSPALSL) are hinge. The NR LBD domain maps to 96–307 (TADQIVSALL…HFRHMSNKGM (212 aa)).

The protein belongs to the nuclear hormone receptor family. NR3 subfamily. As to quaternary structure, binds DNA as a homodimer. Can form a heterodimer with ER-beta.

It is found in the nucleus. The steroid hormones and their receptors are involved in the regulation of eukaryotic gene expression and affect cellular proliferation and differentiation in target tissues. In Aspidoscelis uniparens (Desert grassland whiptail lizard), this protein is Estrogen receptor (ESR1).